Here is a 196-residue protein sequence, read N- to C-terminus: uncharacterized protein (196 aa).

Residues 12 to 66 (LRAAREAQKMSQRELSARSGLTQSHISQIERGTMEPGLGSLVDVARALDLEIVLA) form the HTH cro/C1-type domain. A DNA-binding region (H-T-H motif) is located at residues 23–42 (QRELSARSGLTQSHISQIER). The segment at 174–196 (VHRDRDDAVPRSAYALDEEDDNA) is disordered.

This is an uncharacterized protein from Sinorhizobium fredii (strain NBRC 101917 / NGR234).